Reading from the N-terminus, the 501-residue chain is Head-tail preconnector protein GP5 (501 aa).

The active-site Nucleophile is Ser-162. Lys-214 serves as the catalytic Proton donor/acceptor. TRI repeat units lie at residues 321–358 (ILTCQEAKGREQLATMLAGQQGMSVEQARAILAAAAPQ), 371–417 (IMVC…LRDQ), and 418–455 (IMALDEAKGAEAQAEQLAACPGMTVESARAVLAAGSGK). The segment at 321–455 (ILTCQEAKGR…RAVLAAGSGK (135 aa)) is 3 X 38 AA repeats.

It belongs to the peptidase S49 family.

Functionally, scaffold protein GP6 forms the scaffold for capsid assembly and is required for binding of the 5 and 4 protein products. It is subsequently lost from the head during maturation. This Escherichia coli (Bacteriophage 21) protein is Head-tail preconnector protein GP5 (5).